The chain runs to 256 residues: Small ribosomal subunit protein eS1 (256 aa).

Basic residues predominate over residues 1-18; that stretch reads MAVGKNKRLSKGKKGLKK. The tract at residues 1–20 is disordered; the sequence is MAVGKNKRLSKGKKGLKKRT. An N-acetylalanine; partial modification is found at Ala-2.

This sequence belongs to the eukaryotic ribosomal protein eS1 family. Component of the small ribosomal subunit. Mature ribosomes consist of a small (40S) and a large (60S) subunit. The 40S subunit contains about 33 different proteins and 1 molecule of RNA (18S). The 60S subunit contains about 49 different proteins and 3 molecules of RNA (25S, 5.8S and 5S).

It is found in the cytoplasm. In Talaromyces stipitatus (strain ATCC 10500 / CBS 375.48 / QM 6759 / NRRL 1006) (Penicillium stipitatum), this protein is Small ribosomal subunit protein eS1 (rps1).